We begin with the raw amino-acid sequence, 157 residues long: MSPPAEIQADTLKRFIAGWGGWTMESFFATLSDDFTQKPLPLSCGEPARGREQLYPLLSSLMTMMTNFKLTIHNTIHDPSNKAAVVYAVADGDTPFGPYHNEQAVFIWFNSKGDKVDRIEELFDTAFMAEFKPKFKKWALENPGAAAGRPPPANTST.

It belongs to the avfA family.

Its pathway is secondary metabolite biosynthesis. Its function is as follows. Monooxygenase; part of the ergochrome gene cluster responsible for the typical purple-black color of the ergot sclerotia. The ergochrome gene cluster produces several ergot pigments including the yellow ergochrome secalonic acid and its derivatives, as well as the red anthraquinones endocrocin and clavorubin. The pathway begins with the synthesis of atrochrysone thioester by the polyketide synthase (PKS) CPUR_05437. The atrochrysone carboxyl ACP thioesterase CPUR_05436 then breaks the thioester bond and releases the atrochrysone carboxylic acid from CPUR_05437. The atrochrysone carboxylic acid is then converted to atrochrysone which is further transformed into emodin anthrone. The next step is performed by the anthrone oxygenase CPUR_05434 that catalyzes the oxidation of emodinanthrone to emodin. Emodin is further modified to yield monodictyphenone via several steps involving CPUR_05427, CPUR_05428, CPUR_05429 and CPUR_05430. The short chain dehydrogenase/reductase CPUR_05418 then catalyzes the C-5 ketoreduction to give the xanthone skeleton of the monomeric units. Ergochromes formation requires further dimerization steps of different xanthone units, probably catalyzed by the cytochrome P450 monooxygenase CPUR_05419. CPUR_05425, CPUR_05426 and CPUR_05431 are unique to Claviceps, thus it is likely that they are involved in further modification of xanthone units or in their dimerization. The yellow ergochromes and the red anthraquinone pigments endocrocin and clavorubin are products from the same PKS derived precursors and the latter are likely shunt products in the pathway of xanthone biosynthesis. It is proposed that atrochrysone carboxylic acid released from the PKS CPUR_05437 can also be converted to endocrocin anthrone which is further oxidized into endocrocin by CPUR_05435. Endocrocin could be then modified to clavorubin, possibly by CPUR_05423 and CPUR_05431. Clavorubin is the principal anthraquinone metabolite produced by the cluster with a much higher yield compared to endocrocin. The sequence is that of Monooxygenase CPUR_05417 from Claviceps purpurea (strain 20.1) (Ergot fungus).